Consider the following 442-residue polypeptide: tRNA modification GTPase MnmE (442 aa).

R23, E82, and K121 together coordinate (6S)-5-formyl-5,6,7,8-tetrahydrofolate. The region spanning 215 to 364 (GTSLILAGKP…VKQALIQWMQ (150 aa)) is the TrmE-type G domain. N225 contributes to the K(+) binding site. GTP is bound by residues 225 to 230 (NVGKSS), 244 to 250 (THIPGTT), 269 to 272 (DTAG), and 325 to 328 (NKAD). S229 contacts Mg(2+). K(+) contacts are provided by T244, I246, and T249. T250 is a Mg(2+) binding site. Residue K442 coordinates (6S)-5-formyl-5,6,7,8-tetrahydrofolate.

The protein belongs to the TRAFAC class TrmE-Era-EngA-EngB-Septin-like GTPase superfamily. TrmE GTPase family. In terms of assembly, homodimer. Heterotetramer of two MnmE and two MnmG subunits. K(+) is required as a cofactor.

The protein localises to the cytoplasm. Exhibits a very high intrinsic GTPase hydrolysis rate. Involved in the addition of a carboxymethylaminomethyl (cmnm) group at the wobble position (U34) of certain tRNAs, forming tRNA-cmnm(5)s(2)U34. The polypeptide is tRNA modification GTPase MnmE (Chlamydia pneumoniae (Chlamydophila pneumoniae)).